We begin with the raw amino-acid sequence, 180 residues long: Oligoribonuclease (180 aa).

One can recognise an Exonuclease domain in the interval 7 to 170 (LIWIDLEMTG…DDIRESIAEL (164 aa)). Y128 is an active-site residue.

Belongs to the oligoribonuclease family.

Its subcellular location is the cytoplasm. Functionally, 3'-to-5' exoribonuclease specific for small oligoribonucleotides. The protein is Oligoribonuclease of Ectopseudomonas mendocina (strain ymp) (Pseudomonas mendocina).